The chain runs to 85 residues: SFQETRRVLTKAAFENHIDWLKGLKENVIIGRLIPAGTGFKQFYLYEYTKKNCEENIISLDPYNFEDNIIYKILTNQLEQNKRLN.

This sequence belongs to the RNA polymerase beta' chain family. RpoC2 subfamily. In terms of assembly, in plastids the minimal PEP RNA polymerase catalytic core is composed of four subunits: alpha, beta, beta', and beta''. When a (nuclear-encoded) sigma factor is associated with the core the holoenzyme is formed, which can initiate transcription.

The protein localises to the plastid. It is found in the chloroplast. It catalyses the reaction RNA(n) + a ribonucleoside 5'-triphosphate = RNA(n+1) + diphosphate. Functionally, DNA-dependent RNA polymerase catalyzes the transcription of DNA into RNA using the four ribonucleoside triphosphates as substrates. This Galdieria sulphuraria (Red alga) protein is DNA-directed RNA polymerase subunit beta'' (rpoC2).